The primary structure comprises 304 residues: N-acetyl-D-glucosamine kinase (304 aa).

Residues 4–11 and 133–140 each bind ATP; these read GFDMGGTK and GVGGGLIV. Zn(2+)-binding residues include histidine 157, cysteine 177, cysteine 179, and cysteine 184.

This sequence belongs to the ROK (NagC/XylR) family. NagK subfamily.

It carries out the reaction N-acetyl-D-glucosamine + ATP = N-acetyl-D-glucosamine 6-phosphate + ADP + H(+). It functions in the pathway cell wall biogenesis; peptidoglycan recycling. Its function is as follows. Catalyzes the phosphorylation of N-acetyl-D-glucosamine (GlcNAc) derived from cell-wall degradation, yielding GlcNAc-6-P. This chain is N-acetyl-D-glucosamine kinase, found in Yersinia pseudotuberculosis serotype O:3 (strain YPIII).